The sequence spans 355 residues: 3-isopropylmalate dehydrogenase (355 aa).

Residues arginine 90, arginine 100, arginine 128, and aspartate 222 each contribute to the substrate site. Residues aspartate 222, aspartate 246, and aspartate 250 each coordinate Mg(2+). Residue 280 to 292 participates in NAD(+) binding; the sequence is GSAPDIAGKGIAN.

Belongs to the isocitrate and isopropylmalate dehydrogenases family. LeuB type 1 subfamily. As to quaternary structure, homodimer. The cofactor is Mg(2+). Requires Mn(2+) as cofactor.

The protein localises to the cytoplasm. It carries out the reaction (2R,3S)-3-isopropylmalate + NAD(+) = 4-methyl-2-oxopentanoate + CO2 + NADH. It functions in the pathway amino-acid biosynthesis; L-leucine biosynthesis; L-leucine from 3-methyl-2-oxobutanoate: step 3/4. In terms of biological role, catalyzes the oxidation of 3-carboxy-2-hydroxy-4-methylpentanoate (3-isopropylmalate) to 3-carboxy-4-methyl-2-oxopentanoate. The product decarboxylates to 4-methyl-2 oxopentanoate. The protein is 3-isopropylmalate dehydrogenase of Burkholderia lata (strain ATCC 17760 / DSM 23089 / LMG 22485 / NCIMB 9086 / R18194 / 383).